Here is a 312-residue protein sequence, read N- to C-terminus: Protein-methionine-sulfoxide reductase catalytic subunit MsrP (312 aa).

A signal peptide (tat-type signal) is located at residues 1–47 (MLIRRPPDLLPSEITPEPLARGRRALLKGLGAGAALAGLGLPQISQA). Residues Asn-74, 77-78 (YE), Cys-133, Thr-168, Asn-216, Arg-221, and 232-234 (SAK) each bind Mo-molybdopterin.

Belongs to the MsrP family. As to quaternary structure, heterodimer of a catalytic subunit (MsrP) and a heme-binding subunit (MsrQ). Mo-molybdopterin serves as cofactor. Predicted to be exported by the Tat system. The position of the signal peptide cleavage has not been experimentally proven.

Its subcellular location is the periplasm. It catalyses the reaction L-methionyl-[protein] + a quinone + H2O = L-methionyl-(R)-S-oxide-[protein] + a quinol. Part of the MsrPQ system that repairs oxidized periplasmic proteins containing methionine sulfoxide residues (Met-O), using respiratory chain electrons. Thus protects these proteins from oxidative-stress damage caused by reactive species of oxygen and chlorine generated by the host defense mechanisms. MsrPQ is essential for the maintenance of envelope integrity under bleach stress, rescuing a wide series of structurally unrelated periplasmic proteins from methionine oxidation. The catalytic subunit MsrP is non-stereospecific, being able to reduce both (R-) and (S-) diastereoisomers of methionine sulfoxide. Involved in protection against reactive chlorine species (RCS) generated by chlorite and hypochlorite. The polypeptide is Protein-methionine-sulfoxide reductase catalytic subunit MsrP (Azospira oryzae (strain ATCC BAA-33 / DSM 13638 / PS) (Dechlorosoma suillum)).